The chain runs to 392 residues: UPF0229 protein CPE1333 (392 aa).

Positions 75-100 are disordered; that stretch reads VTTGTGEERRGDRISSDKRKAISNNK. A compositionally biased stretch (basic and acidic residues) spans 80-94; sequence GEERRGDRISSDKRK.

The protein belongs to the UPF0229 family.

This Clostridium perfringens (strain 13 / Type A) protein is UPF0229 protein CPE1333.